The following is a 298-amino-acid chain: tRNA pseudouridine synthase B (298 aa).

Asp39 functions as the Nucleophile in the catalytic mechanism.

The protein belongs to the pseudouridine synthase TruB family. Type 1 subfamily.

It catalyses the reaction uridine(55) in tRNA = pseudouridine(55) in tRNA. Responsible for synthesis of pseudouridine from uracil-55 in the psi GC loop of transfer RNAs. This chain is tRNA pseudouridine synthase B, found in Lactobacillus delbrueckii subsp. bulgaricus (strain ATCC BAA-365 / Lb-18).